The primary structure comprises 231 residues: Dihydropteridine reductase (231 aa).

6–30 (LVLGGSGALGAEVVKFFKSKSWNTI) contacts NADP(+). The active-site Proton acceptor is Y138.

Belongs to the short-chain dehydrogenases/reductases (SDR) family. Homodimer.

The enzyme catalyses 5,6,7,8-tetrahydropteridine + NAD(+) = 6,7-dihydropteridine + NADH + H(+). It carries out the reaction 5,6,7,8-tetrahydropteridine + NADP(+) = 6,7-dihydropteridine + NADPH + H(+). The product of this enzyme, tetrahydrobiopterin (BH-4), is an essential cofactor for phenylalanine, tyrosine, and tryptophan hydroxylases. The sequence is that of Dihydropteridine reductase (qdpr) from Dictyostelium discoideum (Social amoeba).